Reading from the N-terminus, the 193-residue chain is NAD(P)H-quinone oxidoreductase subunit I (193 aa).

4Fe-4S ferredoxin-type domains follow at residues 56-85 (GRIHFEFDKCIACEVCVRVCPINLPVVDWE) and 96-125 (KHYSIDFGVCIFCGNCVEYCPTNCLSMTEE). [4Fe-4S] cluster is bound by residues cysteine 65, cysteine 68, cysteine 71, cysteine 75, cysteine 105, cysteine 108, cysteine 111, and cysteine 115. Residues 174 to 193 (NLPKGSQRAGQHPEDLVKAE) are disordered. Basic and acidic residues predominate over residues 184–193 (QHPEDLVKAE).

The protein belongs to the complex I 23 kDa subunit family. As to quaternary structure, NDH-1 is composed of at least 11 different subunits. It depends on [4Fe-4S] cluster as a cofactor.

The protein localises to the cellular thylakoid membrane. The catalysed reaction is a plastoquinone + NADH + (n+1) H(+)(in) = a plastoquinol + NAD(+) + n H(+)(out). The enzyme catalyses a plastoquinone + NADPH + (n+1) H(+)(in) = a plastoquinol + NADP(+) + n H(+)(out). In terms of biological role, NDH-1 shuttles electrons from an unknown electron donor, via FMN and iron-sulfur (Fe-S) centers, to quinones in the respiratory and/or the photosynthetic chain. The immediate electron acceptor for the enzyme in this species is believed to be plastoquinone. Couples the redox reaction to proton translocation, and thus conserves the redox energy in a proton gradient. In Synechocystis sp. (strain ATCC 27184 / PCC 6803 / Kazusa), this protein is NAD(P)H-quinone oxidoreductase subunit I.